An 842-amino-acid polypeptide reads, in one-letter code: Translation initiation factor IF-2 (842 aa).

The tract at residues 121-144 is disordered; sequence TESTSVEKSESDDVTLEEESSKKV. Residues 340–510 form the tr-type G domain; sequence PRAPVVTVMG…LLMAELLELK (171 aa). Positions 349 to 356 are G1; sequence GHVDHGKT. 349 to 356 is a GTP binding site; the sequence is GHVDHGKT. Positions 374–378 are G2; sequence GITQH. Residues 396 to 399 form a G3 region; that stretch reads DTPG. GTP-binding positions include 396 to 400 and 450 to 453; these read DTPGH and NKID. The G4 stretch occupies residues 450–453; that stretch reads NKID. Residues 486-488 form a G5 region; sequence SAK.

It belongs to the TRAFAC class translation factor GTPase superfamily. Classic translation factor GTPase family. IF-2 subfamily.

The protein localises to the cytoplasm. One of the essential components for the initiation of protein synthesis. Protects formylmethionyl-tRNA from spontaneous hydrolysis and promotes its binding to the 30S ribosomal subunits. Also involved in the hydrolysis of GTP during the formation of the 70S ribosomal complex. This Ehrlichia chaffeensis (strain ATCC CRL-10679 / Arkansas) protein is Translation initiation factor IF-2.